The following is a 1114-amino-acid chain: Transcriptional repressor NF-X1 (1114 aa).

The segment at 9-26 is interaction with PABPC1 and PABC4; that stretch reads GTFKFNTDAAEFIPQERK. 3 disordered regions span residues 20-220, 232-287, and 299-325; these read FIPQ…CRKP, QRRY…PTKS, and KSSRRVNQEKTAVRRQDPQVLSPFPRG. A phosphoserine mark is found at S50, S81, S92, S126, S130, and S147. Composition is skewed to polar residues over residues 72–103 and 121–142; these read SYASGSKPKSPQGFFQSSNKSLKNHGLQNQPW and LSEQTSDTSSLESVARSESGTN. Composition is skewed to basic and acidic residues over residues 143–156, 185–202, 232–248, and 304–315; these read PREHSPSESEKEVV, LRSEWGNRMSPKSEDENT, QRRYPQKRPPWEVEGAR, and VNQEKTAVRRQD. Residue S320 is modified to Phosphoserine. The segment at 352–403 adopts an RING-type; atypical zinc-finger fold; it reads CMVCCELVQVTAPVWSCQSCFHVFHLNCIKKWARSPASHADGQSGWRCPACQ. 8 consecutive NF-X1-type zinc fingers follow at residues 447 to 465, 500 to 519, 561 to 580, 626 to 649, 688 to 707, 715 to 734, 826 to 848, and 857 to 878; these read CPHSCNLLCHPGPCPPCPA, CGQHHCAELCHGGQCQPCRI, CGSHTCSQVCHPQPCQPCPR, CGSSDFIHTCEKLCHEGDCGPCSR, CGRHKCNEICCVDKEHKCPL, CGLHRCEEPCHRGNCQTCWQ, CGMHKCQRLCHKGECLVDEACKQ, and CGHPCMAPCHPSLPCPVTACKA. In terms of domain architecture, R3H spans 988 to 1056; that stretch reads LKFVSDVEKE…KRNVVVTAVR (69 aa). The disordered stretch occupies residues 1071–1095; the sequence is ERETQTRPPPPIPHHRHQADKAPGS.

It belongs to the NFX1 family. In terms of assembly, interacts with PABPC1 and PABPC4. In terms of tissue distribution, ubiquitously expressed, with highest levels in thymus.

Its subcellular location is the nucleus. In terms of biological role, binds to the X-box motif of MHC class II genes and represses their expression. May play an important role in regulating the duration of an inflammatory response by limiting the period in which MHC class II molecules are induced by interferon-gamma. Together with PABPC1 or PABPC4, acts as a coactivator for TERT expression. Mediates E2-dependent ubiquitination. This Mus musculus (Mouse) protein is Transcriptional repressor NF-X1 (Nfx1).